We begin with the raw amino-acid sequence, 938 residues long: Isoleucine--tRNA ligase (938 aa).

Residues 58-68 carry the 'HIGH' region motif; that stretch reads PYANGSIHIGH. An N6-acetyllysine modification is found at lysine 183. An L-isoleucyl-5'-AMP-binding site is contributed by glutamate 561. The 'KMSKS' region motif lies at 602–606; it reads KMSKS. Lysine 605 contributes to the ATP binding site. Zn(2+) is bound by residues cysteine 901, cysteine 904, cysteine 921, and cysteine 924.

This sequence belongs to the class-I aminoacyl-tRNA synthetase family. IleS type 1 subfamily. Monomer. Zn(2+) is required as a cofactor.

The protein localises to the cytoplasm. It catalyses the reaction tRNA(Ile) + L-isoleucine + ATP = L-isoleucyl-tRNA(Ile) + AMP + diphosphate. Catalyzes the attachment of isoleucine to tRNA(Ile). As IleRS can inadvertently accommodate and process structurally similar amino acids such as valine, to avoid such errors it has two additional distinct tRNA(Ile)-dependent editing activities. One activity is designated as 'pretransfer' editing and involves the hydrolysis of activated Val-AMP. The other activity is designated 'posttransfer' editing and involves deacylation of mischarged Val-tRNA(Ile). In Escherichia coli O17:K52:H18 (strain UMN026 / ExPEC), this protein is Isoleucine--tRNA ligase.